An 86-amino-acid polypeptide reads, in one-letter code: Large ribosomal subunit protein bL27 (86 aa).

Belongs to the bacterial ribosomal protein bL27 family.

This Christiangramia forsetii (strain DSM 17595 / CGMCC 1.15422 / KT0803) (Gramella forsetii) protein is Large ribosomal subunit protein bL27.